Reading from the N-terminus, the 298-residue chain is Acetyl-coenzyme A carboxylase carboxyl transferase subunit beta 1 (298 aa).

The CoA carboxyltransferase N-terminal domain occupies 26 to 294; that stretch reads MWVKCPSCGD…RAADVQNAPA (269 aa). Residues cysteine 30, cysteine 33, cysteine 49, and cysteine 51 each coordinate Zn(2+). A C4-type zinc finger spans residues 30–51; the sequence is CPSCGDLIYTRQFSDNLKVCKC.

The protein belongs to the AccD/PCCB family. Acetyl-CoA carboxylase is a heterohexamer composed of biotin carboxyl carrier protein (AccB), biotin carboxylase (AccC) and two subunits each of ACCase subunit alpha (AccA) and ACCase subunit beta (AccD). Requires Zn(2+) as cofactor.

The protein resides in the cytoplasm. It carries out the reaction N(6)-carboxybiotinyl-L-lysyl-[protein] + acetyl-CoA = N(6)-biotinyl-L-lysyl-[protein] + malonyl-CoA. It participates in lipid metabolism; malonyl-CoA biosynthesis; malonyl-CoA from acetyl-CoA: step 1/1. Functionally, component of the acetyl coenzyme A carboxylase (ACC) complex. Biotin carboxylase (BC) catalyzes the carboxylation of biotin on its carrier protein (BCCP) and then the CO(2) group is transferred by the transcarboxylase to acetyl-CoA to form malonyl-CoA. This is Acetyl-coenzyme A carboxylase carboxyl transferase subunit beta 1 from Roseiflexus castenholzii (strain DSM 13941 / HLO8).